The primary structure comprises 368 residues: MLIPLARAVLALALLGAGAAHAERLKDLASIQGVRGNQLIGYGLVVGLDGSGDQVRQTPFTQQSLTNMLSQLGITVPQGSNMQLKNVAAVMVTATLPSFARPGQTVDVVVSSMGNAKSLRGGTLLMTPLKGADNQVYAIAQGNLLVGGAGASAGGSSVQINQLNGGRISNGAIVERAVPTMYAQDGTVYLEMNNTDFGTTQNAAAAINRQFGAGTAMALDGRVIQVRGPLDPSMMPAFMSQVENLQVARAPATAKVIINARTGSVVMNRTVMIEEAAVAHGNLSVIINRQNQVFQPDTPFTEGQTVVVPNTQIEVRQDGGALQRVTTSANLADVVKALNALGATPQDLLAILQAMKTAGALRADLEII.

The N-terminal stretch at 1-22 (MLIPLARAVLALALLGAGAAHA) is a signal peptide.

Belongs to the FlgI family. As to quaternary structure, the basal body constitutes a major portion of the flagellar organelle and consists of four rings (L,P,S, and M) mounted on a central rod.

Its subcellular location is the periplasm. It is found in the bacterial flagellum basal body. Its function is as follows. Assembles around the rod to form the L-ring and probably protects the motor/basal body from shearing forces during rotation. The sequence is that of Flagellar P-ring protein from Bordetella bronchiseptica (strain ATCC BAA-588 / NCTC 13252 / RB50) (Alcaligenes bronchisepticus).